We begin with the raw amino-acid sequence, 729 residues long: Neurochondrin (729 aa).

S2 bears the N-acetylserine mark. S2 carries the post-translational modification Phosphoserine. Residue S2 is modified to N-acetylalanine. 2 S-palmitoyl cysteine lipidation sites follow: C3 and C4. Position 75 is an asymmetric dimethylarginine (R75). Phosphoserine is present on S448.

The protein belongs to the neurochondrin family. In terms of assembly, interacts with MCHR1. Interacts with SEMA4C. Interacts with DIAPH1 (via FH3 domain). Interacts with GRM5. Palmitoylated. Palmitoylation by ZDHHC1, ZDHHC3 and ZDHHC11 regulates the association of NCDN with endosome membranes. May also be palmitoylated by ZDHHC7. As to expression, abundantly expressed in whole adult brain and in all individual brain regions examined, including spinal cord. Weakly expressed in ovary, testis, fetal brain and small intestine.

The protein localises to the cytoplasm. It is found in the cytosol. The protein resides in the endosome membrane. Its subcellular location is the cell projection. It localises to the dendrite. The protein localises to the postsynapse. Its function is as follows. Probably involved in signal transduction in the nervous system, via increasing cell surface localization of GRM5/mGluR5 and positively regulating its signaling. Required for the spatial learning process. Acts as a negative regulator of Ca(2+)-calmodulin-dependent protein kinase 2 (CaMK2) phosphorylation. May play a role in modulating melanin-concentrating hormone-mediated functions via its interaction with MCHR1 that interferes with G protein-coupled signal transduction. May be involved in bone metabolism. May also be involved in neurite outgrowth. This is Neurochondrin from Homo sapiens (Human).